The sequence spans 173 residues: Crossover junction endodeoxyribonuclease RuvC (173 aa).

Residues Asp-8, Glu-67, and Asp-139 contribute to the active site. Mg(2+) contacts are provided by Asp-8, Glu-67, and Asp-139.

This sequence belongs to the RuvC family. Homodimer which binds Holliday junction (HJ) DNA. The HJ becomes 2-fold symmetrical on binding to RuvC with unstacked arms; it has a different conformation from HJ DNA in complex with RuvA. In the full resolvosome a probable DNA-RuvA(4)-RuvB(12)-RuvC(2) complex forms which resolves the HJ. Mg(2+) is required as a cofactor.

Its subcellular location is the cytoplasm. It catalyses the reaction Endonucleolytic cleavage at a junction such as a reciprocal single-stranded crossover between two homologous DNA duplexes (Holliday junction).. In terms of biological role, the RuvA-RuvB-RuvC complex processes Holliday junction (HJ) DNA during genetic recombination and DNA repair. Endonuclease that resolves HJ intermediates. Cleaves cruciform DNA by making single-stranded nicks across the HJ at symmetrical positions within the homologous arms, yielding a 5'-phosphate and a 3'-hydroxyl group; requires a central core of homology in the junction. The consensus cleavage sequence is 5'-(A/T)TT(C/G)-3'. Cleavage occurs on the 3'-side of the TT dinucleotide at the point of strand exchange. HJ branch migration catalyzed by RuvA-RuvB allows RuvC to scan DNA until it finds its consensus sequence, where it cleaves and resolves the cruciform DNA. Functionally, plays a role in recovery after DNA ADP-ribosylation, probably via replication fork reversal. The sequence is that of Crossover junction endodeoxyribonuclease RuvC from Escherichia coli O127:H6 (strain E2348/69 / EPEC).